The following is a 488-amino-acid chain: IQ domain-containing protein IQM1 (488 aa).

The tract at residues 20–46 (RTNSFKRDDTNRHQNSPKSTMERSLSF) is disordered. The segment covering 32 to 46 (HQNSPKSTMERSLSF) has biased composition (polar residues). Residues 106–135 (LDAAATTLQKVYKSYRTRRNLADCAVVVEE) form the IQ domain. Disordered regions lie at residues 377 to 403 (SFKS…EKEE) and 448 to 472 (SPRV…VRVS). Over residues 388-403 (RKEVSEEVEIPSEKEE) the composition is skewed to basic and acidic residues.

As to quaternary structure, interacts (via IQ domain) with CAM5. Highly expressed in leaf mesophyll cells. Expressed in roots, rosette and cauline leaves, stems, flowers and siliques.

It localises to the cytoplasm. It is found in the nucleus. In terms of biological role, involved in the modulation of stomatal movement. Promotes stomatal opening. May play a role in the regulation of chitin signaling. May be involved in biotic and abiotic stress responses. This Arabidopsis thaliana (Mouse-ear cress) protein is IQ domain-containing protein IQM1.